The sequence spans 322 residues: uncharacterized protein (322 aa).

Residues 1-17 are compositionally biased toward low complexity; sequence MASMAAAIAASRSAVMS. Positions 1–22 are disordered; that stretch reads MASMAAAIAASRSAVMSGNRPL. Ala2 bears the N-acetylalanine mark. Phosphoserine is present on Ser37. The segment at 81–104 is disordered; sequence AAAADAGDVRDPARFPGLRGPTGQ. Ser130 bears the Phosphoserine mark. 2 stretches are compositionally biased toward polar residues: residues 142 to 153 and 161 to 177; these read QEPSAATVTSDA and QGTQ…SSSL. The segment at 142–301 is disordered; sequence QEPSAATVTS…DDDALFSEPA (160 aa). At Ser176 the chain carries Phosphoserine. The span at 183 to 203 shows a compositional bias: basic and acidic residues; that stretch reads ARKEEEAPFWKINAERSREGP. Polar residues predominate over residues 245 to 255; the sequence is QEQQTLPSVSA.

The protein resides in the cytoplasm. This is an uncharacterized protein from Mus musculus (Mouse).